A 349-amino-acid polypeptide reads, in one-letter code: MHRNFRKWIFYVFLCFGVLYVKLGALSSVVALGANIICNKIPGLAPRQRAICQSRPDAIIVIGEGAQMGIDECQHQFRFGRWNCSALGEKTVFGQELRVGSREAAFTYAITAAGVAHAVTAACSQGNLSNCGCDREKQGYYNQAEGWKWGGCSADVRYGIDFSRRFVDAREIKKNARRLMNLHNNEAGRKVLEDRMKLECKCHGVSGSCTTKTCWTTLPKFREVGHLLKEKYNAAVQVEVVRASRLRQPTFLRIKQLRSYQKPMETDLVYIEKSPNYCEEDAATGSVGTQGRLCNRTSPGADGCDTMCCGRGYNTHQYTKVWQCNCKFHWCCFVKCNTCSERTEVFTCK.

The signal sequence occupies residues 1 to 24 (MHRNFRKWIFYVFLCFGVLYVKLG). 5 disulfides stabilise this stretch: Cys-73-Cys-84, Cys-123-Cys-131, Cys-133-Cys-152, Cys-200-Cys-214, and Cys-202-Cys-209. 2 N-linked (GlcNAc...) asparagine glycosylation sites follow: Asn-83 and Asn-127. Ser-206 carries O-palmitoleoyl serine; by PORCN lipidation. Residues 238–266 (VEVVRASRLRQPTFLRIKQLRSYQKPMET) are disordered linker. Cystine bridges form between Cys-278/Cys-309, Cys-294/Cys-304, Cys-308/Cys-348, Cys-324/Cys-339, Cys-326/Cys-336, and Cys-331/Cys-332. Asn-295 carries N-linked (GlcNAc...) asparagine glycosylation.

This sequence belongs to the Wnt family. Forms a soluble 1:1 complex with AFM; this prevents oligomerization and is required for prolonged biological activity. The complex with AFM may represent the physiological form in body fluids. Interacts with FZD1 and FZD10. Interacts with FZD4 (in vitro). Interacts with PORCN. Interacts with glypican GPC3. Interacts (via intrinsically disordered linker region) with RECK; interaction with RECK confers ligand selectivity for Wnt7 in brain endothelial cells and allows these cells to selectively respond to Wnt7. Post-translationally, palmitoleoylation is required for efficient binding to frizzled receptors. Depalmitoleoylation leads to Wnt signaling pathway inhibition.

The protein localises to the secreted. Its subcellular location is the extracellular space. The protein resides in the extracellular matrix. In terms of biological role, ligand for members of the frizzled family of seven transmembrane receptors that functions in the canonical Wnt/beta-catenin signaling pathway. Required for normal fusion of the chorion and the allantois during placenta development. Required for central nervous system (CNS) angiogenesis and blood-brain barrier regulation. In Mus musculus (Mouse), this protein is Protein Wnt-7b (Wnt7b).